Here is a 143-residue protein sequence, read N- to C-terminus: Small ribosomal subunit protein bS6 (143 aa).

A disordered region spans residues 97 to 143 (DTEQSLIMKSKDEKGDKHERSERRRRDDEEGDVPAATDTDGDNAEAA). Residues 105 to 124 (KSKDEKGDKHERSERRRRDD) are compositionally biased toward basic and acidic residues.

This sequence belongs to the bacterial ribosomal protein bS6 family.

Binds together with bS18 to 16S ribosomal RNA. The polypeptide is Small ribosomal subunit protein bS6 (Xanthomonas oryzae pv. oryzae (strain MAFF 311018)).